The chain runs to 142 residues: Baculoviral IAP repeat-containing protein 5 (142 aa).

The BIR repeat unit spans residues 18–88 (RVSTFKNWPF…KHSSGCAFLS (71 aa)). Ser20 carries the phosphoserine; by AURKC modification. An N6-acetyllysine modification is found at Lys23. A Phosphothreonine; by CDK1 and CDK15 modification is found at Thr34. A Phosphothreonine; by CK2; in vitro modification is found at Thr48. Zn(2+)-binding residues include Cys57, Cys60, His77, and Cys84. Residues Lys90, Lys110, Lys112, and Lys115 each carry the N6-acetyllysine modification. Position 117 is a phosphothreonine; by AURKB (Thr117).

Belongs to the IAP family. As to quaternary structure, monomer or homodimer. Exists as a homodimer in the apo state and as a monomer in the CPC-bound state. The monomer protects cells against apoptosis more efficiently than the dimer. Only the dimeric form is capable of enhancing tubulin stability in cells. When phosphorylated, interacts with LAMTOR5/HBXIP; the resulting complex binds pro-CASP9, as well as active CASP9, but much less efficiently. Component of the chromosomal passenger complex (CPC) composed of at least BIRC5/survivin, CDCA8/borealin, INCENP, AURKB or AURKC; in the complex forms a triple-helix bundle-based subcomplex with INCENP and CDCA8. Interacts with JTB. Interacts (via BIR domain) with histone H3 phosphorylated at 'Thr-3' (H3pT3). Interacts with EVI5. Interacts with GTP-bound RAN in both the S and M phases of the cell cycle. Interacts with USP9X. Interacts with tubulin. Interacts with BIRC2/c-IAP1. The monomeric form interacts with XIAP/BIRC4. Both the dimeric and monomeric form can interact with DIABLO/SMAC. Interacts with BIRC6/bruce. Interacts with FBXL7; this interaction facilitates the polyubiquitination and subsequent proteasomal degradation of BIRC5 by the SCF(FBXL7) E3 ubiquitin-protein ligase complex. In terms of processing, ubiquitinated by the Cul9-RING ubiquitin-protein ligase complex, leading to its degradation. Ubiquitination is required for centrosomal targeting. Deubiquitinated by USP35 or USP38; leading to stabilization. Post-translationally, in vitro phosphorylation at Thr-117 by AURKB prevents interaction with INCENP and localization to mitotic chromosomes. Phosphorylation at Thr-48 by CK2 is critical for its mitotic and anti-apoptotic activities. Phosphorylation at Thr-34 by CDK15 is critical for its anti-apoptotic activity. Phosphorylation at Ser-20 by AURKC is critical for regulation of proper chromosome alignment and segregation, and possibly cytokinesis. In terms of tissue distribution, expressed in spleen, lung, brain, heart, kidney and intestine (at protein level). Expressed in cochlea including the organ of Corti, the lateral wall, the interdental cells of the Limbus as well as in cells of the cochlear nerve and the spiral ganglions (at protein level). Also expressed in Schwann cells (at protein level). Not expressed in cells of the inner and outer sulcus or the Reissner's membrane (at protein level).

The protein localises to the cytoplasm. Its subcellular location is the nucleus. The protein resides in the chromosome. It localises to the centromere. It is found in the cytoskeleton. The protein localises to the spindle. Its subcellular location is the kinetochore. The protein resides in the midbody. Multitasking protein that has dual roles in promoting cell proliferation and preventing apoptosis. Component of a chromosome passage protein complex (CPC) which is essential for chromosome alignment and segregation during mitosis and cytokinesis. Acts as an important regulator of the localization of this complex; directs CPC movement to different locations from the inner centromere during prometaphase to midbody during cytokinesis and participates in the organization of the center spindle by associating with polymerized microtubules. Involved in the recruitment of CPC to centromeres during early mitosis via association with histone H3 phosphorylated at 'Thr-3' (H3pT3) during mitosis. The complex with RAN plays a role in mitotic spindle formation by serving as a physical scaffold to help deliver the RAN effector molecule TPX2 to microtubules. May counteract a default induction of apoptosis in G2/M phase. The acetylated form represses STAT3 transactivation of target gene promoters. May play a role in neoplasia. Inhibitor of CASP3 and CASP7. Essential for the maintenance of mitochondrial integrity and function. This chain is Baculoviral IAP repeat-containing protein 5, found in Cavia porcellus (Guinea pig).